A 527-amino-acid chain; its full sequence is Probable protein kinase UbiB (527 aa).

The chain crosses the membrane as a helical span at residues 23–43; sequence ELLLELPLPFWLRALSWLLPW. Positions 125 to 488 constitute a Protein kinase domain; that stretch reads RFDSQPLASA…ESDARDQWPL (364 aa). ATP contacts are provided by residues 131-139 and Lys-153; that span reads LASASVAQV. Asp-288 (proton acceptor) is an active-site residue. Residues 504–524 traverse the membrane as a helical segment; the sequence is LAPLLATWPAWLMVGGGLYLV.

Belongs to the ABC1 family. UbiB subfamily.

The protein resides in the cell inner membrane. Its pathway is cofactor biosynthesis; ubiquinone biosynthesis [regulation]. Functionally, is probably a protein kinase regulator of UbiI activity which is involved in aerobic coenzyme Q (ubiquinone) biosynthesis. The polypeptide is Probable protein kinase UbiB (Ectopseudomonas mendocina (strain ymp) (Pseudomonas mendocina)).